A 313-amino-acid chain; its full sequence is Recombination-promoting nuclease pSLT051 (313 aa).

Belongs to the Rpn/YhgA-like nuclease family.

Its function is as follows. A low activity DNA endonuclease probably yielding 3'-hydroxyl ends. Involved in RecA-independent recombination and horizontal gene transfer. The protein is Recombination-promoting nuclease pSLT051 of Salmonella typhimurium (strain LT2 / SGSC1412 / ATCC 700720).